A 152-amino-acid polypeptide reads, in one-letter code: Transcriptional regulator MraZ (152 aa).

SpoVT-AbrB domains are found at residues 5–52 (ASAI…PLKE) and 81–124 (ATEC…SDAE).

The protein belongs to the MraZ family. In terms of assembly, forms oligomers.

The protein localises to the cytoplasm. Its subcellular location is the nucleoid. This Pasteurella multocida (strain Pm70) protein is Transcriptional regulator MraZ.